Consider the following 305-residue polypeptide: Protoheme IX farnesyltransferase (305 aa).

9 consecutive transmembrane segments (helical) span residues valine 31–histidine 51, proline 52–isoleucine 72, valine 96–alanine 118, leucine 123–lysine 145, asparagine 151–serine 171, isoleucine 179–phenylalanine 199, isoleucine 225–asparagine 245, phenylalanine 247–leucine 267, and phenylalanine 281–isoleucine 301.

The protein belongs to the UbiA prenyltransferase family. Protoheme IX farnesyltransferase subfamily.

It is found in the cell membrane. The enzyme catalyses heme b + (2E,6E)-farnesyl diphosphate + H2O = Fe(II)-heme o + diphosphate. The protein operates within porphyrin-containing compound metabolism; heme O biosynthesis; heme O from protoheme: step 1/1. Its function is as follows. Converts heme B (protoheme IX) to heme O by substitution of the vinyl group on carbon 2 of heme B porphyrin ring with a hydroxyethyl farnesyl side group. In Rickettsia africae (strain ESF-5), this protein is Protoheme IX farnesyltransferase.